The sequence spans 220 residues: Ribosomal RNA small subunit methyltransferase J (220 aa).

S-adenosyl-L-methionine contacts are provided by residues 55–56, 71–72, and D123; these read RD and ER.

It belongs to the methyltransferase superfamily. RsmJ family.

It is found in the cytoplasm. It catalyses the reaction guanosine(1516) in 16S rRNA + S-adenosyl-L-methionine = N(2)-methylguanosine(1516) in 16S rRNA + S-adenosyl-L-homocysteine + H(+). Functionally, specifically methylates the guanosine in position 1516 of 16S rRNA. The chain is Ribosomal RNA small subunit methyltransferase J from Rhodopseudomonas palustris (strain BisB5).